The sequence spans 507 residues: ATP synthase subunit alpha, chloroplastic (507 aa).

170 to 177 (GDRQTGKT) is an ATP binding site.

The protein belongs to the ATPase alpha/beta chains family. F-type ATPases have 2 components, CF(1) - the catalytic core - and CF(0) - the membrane proton channel. CF(1) has five subunits: alpha(3), beta(3), gamma(1), delta(1), epsilon(1). CF(0) has four main subunits: a, b, b' and c.

Its subcellular location is the plastid. The protein resides in the chloroplast thylakoid membrane. It catalyses the reaction ATP + H2O + 4 H(+)(in) = ADP + phosphate + 5 H(+)(out). Produces ATP from ADP in the presence of a proton gradient across the membrane. The alpha chain is a regulatory subunit. The protein is ATP synthase subunit alpha, chloroplastic of Oenothera glazioviana (Large-flowered evening primrose).